The sequence spans 262 residues: 3-methyl-2-oxobutanoate hydroxymethyltransferase (262 aa).

Residues D43 and D82 each contribute to the Mg(2+) site. Residues 43 to 44 (DS), D82, and K111 each bind 3-methyl-2-oxobutanoate. E113 contacts Mg(2+). The active-site Proton acceptor is E180.

Belongs to the PanB family. Homodecamer; pentamer of dimers. Requires Mg(2+) as cofactor.

The protein localises to the cytoplasm. It catalyses the reaction 3-methyl-2-oxobutanoate + (6R)-5,10-methylene-5,6,7,8-tetrahydrofolate + H2O = 2-dehydropantoate + (6S)-5,6,7,8-tetrahydrofolate. It participates in cofactor biosynthesis; (R)-pantothenate biosynthesis; (R)-pantoate from 3-methyl-2-oxobutanoate: step 1/2. Functionally, catalyzes the reversible reaction in which hydroxymethyl group from 5,10-methylenetetrahydrofolate is transferred onto alpha-ketoisovalerate to form ketopantoate. The chain is 3-methyl-2-oxobutanoate hydroxymethyltransferase from Wolinella succinogenes (strain ATCC 29543 / DSM 1740 / CCUG 13145 / JCM 31913 / LMG 7466 / NCTC 11488 / FDC 602W) (Vibrio succinogenes).